Reading from the N-terminus, the 255-residue chain is Cysteine protease avirulence protein AvrRpt2 (255 aa).

Residues 1–50 are disordered; that stretch reads MKIAPVAINHSPLSREVPSHAAPTQAKQTNLQSEAGDLDARKSSASSPET. Residues 1–71 constitute a propeptide, removed in mature form; sequence MKIAPVAINH…RHKIEVPAFG (71 aa). Residues 70–71 form a determinants of cleavage specificity region; that stretch reads FG. Residues 76 to 100 form a disordered region; the sequence is KKSSKHETGGSSANADSSSVASDST. Residues 86–98 are compositionally biased toward low complexity; the sequence is SSANADSSSVASD. The active-site Nucleophile is C122. Residues H208 and D226 contribute to the active site.

This sequence belongs to the peptidase C70 family. In terms of assembly, interacts physically with plant cell ROC1 (Arabidopsis single-domain cyclophilin) and RIN4. Post-translationally, autocleaved inside plant cells upon activation by cyclophilin. Cleavage is crucial in subcellular location and in eliciting HR. Inhibited by cyclosporin A (cyclophilin inhibitor).

The protein localises to the secreted. The protein resides in the host cell membrane. Its function is as follows. Effector protein involved in gene-for-gene resistance in plants expressing RPS2. Its thiol protease activity is required for the degradation of plant cell RIN4 and consequent activation of RPS2 during bacterial infection. The activation of RPS2 is sufficient for the induction of hypersensitive response (HR) and plant resistance. Cleavage of RIN4 by AvrRpt2 also interferes with RPM1-mediated resistance activated by either AvrRpm1 or AvrB. Contributes to virulence in plants lacking the resistance protein RPS2 promoting pathogen growth and disease symptoms. Inhibits PAMP (pathogen-associated molecular patterns)-induced signaling compromising the host's basal defense system. Blocks plant callose deposition, flg22 (a peptide corresponding to the most conserved domain of flagellin) induced accumulation of PR-1, PR-2 and PR-5 and activation of GST6 transcription. The mechanism of virulence is unknown, but this activity is independent of ethylene and salicylic acid response pathways and independent of RIN4 disappearance. This Pseudomonas syringae pv. tomato protein is Cysteine protease avirulence protein AvrRpt2 (avrRpt2).